A 339-amino-acid chain; its full sequence is DNA-directed RNA polymerase subunit alpha (339 aa).

An alpha N-terminal domain (alpha-NTD) region spans residues 1–233 (MVREEVAGST…DLFLPFLHAE (233 aa)). The segment at 264–339 (KKGIPLNCIF…IDLLKNKLSF (76 aa)) is alpha C-terminal domain (alpha-CTD).

This sequence belongs to the RNA polymerase alpha chain family. In plastids the minimal PEP RNA polymerase catalytic core is composed of four subunits: alpha, beta, beta', and beta''. When a (nuclear-encoded) sigma factor is associated with the core the holoenzyme is formed, which can initiate transcription.

It is found in the plastid. The protein localises to the chloroplast. The enzyme catalyses RNA(n) + a ribonucleoside 5'-triphosphate = RNA(n+1) + diphosphate. Functionally, DNA-dependent RNA polymerase catalyzes the transcription of DNA into RNA using the four ribonucleoside triphosphates as substrates. The chain is DNA-directed RNA polymerase subunit alpha from Aegilops uniaristata (Goatgrass).